The sequence spans 183 residues: MKKKASLSEEDQTLFRQLMVGTRQIKQDTIVHRPQRKKITEVPTRRLIQEQADASHYFSDEFQPLLNTEGPVKYVREDVSHFELKKMRRGDYSPELFLDLHGLTQLQAKQELGALITACRREHIFCACVMHGHGKHILKQQTPLWLAQHPHVMAFHQAPKEYGGDAALLVLIEVEEWQPPELP.

One can recognise a Smr domain in the interval 98-173 (LDLHGLTQLQ…GDAALLVLIE (76 aa)).

It belongs to the SmrB family. Associates with collided ribosomes, but not with correctly translating polysomes.

In terms of biological role, acts as a ribosome collision sensor. Detects stalled/collided disomes (pairs of ribosomes where the leading ribosome is stalled and a second ribosome has collided with it) and endonucleolytically cleaves mRNA at the 5' boundary of the stalled ribosome. Stalled/collided disomes form a new interface (primarily via the 30S subunits) that binds SmrB. Cleaved mRNA becomes available for tmRNA ligation, leading to ribosomal subunit dissociation and rescue of stalled ribosomes. The polypeptide is Ribosome rescue factor SmrB (Salmonella arizonae (strain ATCC BAA-731 / CDC346-86 / RSK2980)).